Here is an 87-residue protein sequence, read N- to C-terminus: Acyl-CoA-binding protein (87 aa).

N-acetylserine is present on S2. In terms of domain architecture, ACB spans 2–87 (SQAEFDKAAE…VEELKKKYGI (86 aa)). K8 is subject to N6-acetyllysine; alternate. N6-succinyllysine; alternate is present on K8. Position 14 (K14) interacts with an acyl-CoA. N6-succinyllysine is present on K17. An N6-acetyllysine modification is found at K19. Residue Y29 is modified to Phosphotyrosine. An acyl-CoA-binding positions include 29-33 (YSHYK), K51, K55, and Y74. K51 is subject to N6-acetyllysine. K55 bears the N6-acetyllysine; alternate mark. An N6-succinyllysine; alternate modification is found at K55. N6-(2-hydroxyisobutyryl)lysine; alternate is present on K55. K55 carries the post-translational modification N6-malonyllysine; alternate. K77 is subject to N6-acetyllysine; alternate. K77 bears the N6-succinyllysine; alternate mark.

Belongs to the ACBP family. Monomer.

Its subcellular location is the endoplasmic reticulum. It localises to the golgi apparatus. In terms of biological role, binds medium- and long-chain acyl-CoA esters with very high affinity and may function as an intracellular carrier of acyl-CoA esters. It is also able to displace diazepam from the benzodiazepine (BZD) recognition site located on the GABA type A receptor. It is therefore possible that this protein also acts as a neuropeptide to modulate the action of the GABA receptor. The chain is Acyl-CoA-binding protein (DBI) from Bos taurus (Bovine).